We begin with the raw amino-acid sequence, 369 residues long: Phosphoribosyl pyrophosphate synthase-associated protein 2 (369 aa).

N-acetylmethionine is present on M1. Residues S219, S227, and S233 each carry the phosphoserine modification.

The protein belongs to the ribose-phosphate pyrophosphokinase family. In terms of assembly, binds to PRPS1 and PRPS2.

Its function is as follows. Seems to play a negative regulatory role in 5-phosphoribose 1-diphosphate synthesis. The protein is Phosphoribosyl pyrophosphate synthase-associated protein 2 (PRPSAP2) of Bos taurus (Bovine).